The chain runs to 204 residues: Imidazoleglycerol-phosphate dehydratase (204 aa).

It belongs to the imidazoleglycerol-phosphate dehydratase family.

It is found in the cytoplasm. The catalysed reaction is D-erythro-1-(imidazol-4-yl)glycerol 3-phosphate = 3-(imidazol-4-yl)-2-oxopropyl phosphate + H2O. Its pathway is amino-acid biosynthesis; L-histidine biosynthesis; L-histidine from 5-phospho-alpha-D-ribose 1-diphosphate: step 6/9. The chain is Imidazoleglycerol-phosphate dehydratase from Rhodococcus erythropolis (strain PR4 / NBRC 100887).